A 150-amino-acid chain; its full sequence is Small ribosomal subunit protein uS13 (150 aa).

Belongs to the universal ribosomal protein uS13 family. As to quaternary structure, part of the 30S ribosomal subunit. Forms a loose heterodimer with protein S19. Forms two bridges to the 50S subunit in the 70S ribosome.

In terms of biological role, located at the top of the head of the 30S subunit, it contacts several helices of the 16S rRNA. In the 70S ribosome it contacts the 23S rRNA (bridge B1a) and protein L5 of the 50S subunit (bridge B1b), connecting the 2 subunits; these bridges are implicated in subunit movement. The polypeptide is Small ribosomal subunit protein uS13 (Methanocorpusculum labreanum (strain ATCC 43576 / DSM 4855 / Z)).